The sequence spans 507 residues: Glycerol kinase (507 aa).

Threonine 14 contacts ADP. Positions 14, 15, and 16 each coordinate ATP. Threonine 14 is a sn-glycerol 3-phosphate binding site. Arginine 18 contacts ADP. Arginine 84, glutamate 85, tyrosine 136, and aspartate 246 together coordinate sn-glycerol 3-phosphate. Glycerol is bound by residues arginine 84, glutamate 85, tyrosine 136, aspartate 246, and glutamine 247. Residues threonine 268 and glycine 311 each coordinate ADP. Residues threonine 268, glycine 311, glutamine 315, and glycine 412 each coordinate ATP. ADP is bound by residues glycine 412 and asparagine 416.

The protein belongs to the FGGY kinase family.

It carries out the reaction glycerol + ATP = sn-glycerol 3-phosphate + ADP + H(+). The protein operates within polyol metabolism; glycerol degradation via glycerol kinase pathway; sn-glycerol 3-phosphate from glycerol: step 1/1. With respect to regulation, inhibited by fructose 1,6-bisphosphate (FBP). In terms of biological role, key enzyme in the regulation of glycerol uptake and metabolism. Catalyzes the phosphorylation of glycerol to yield sn-glycerol 3-phosphate. The sequence is that of Glycerol kinase from Vibrio atlanticus (strain LGP32) (Vibrio splendidus (strain Mel32)).